Reading from the N-terminus, the 337-residue chain is Ketol-acid reductoisomerase (NADP(+)) (337 aa).

Positions 3-183 (VEMFYDDDAD…GGARAGVIKT (181 aa)) constitute a KARI N-terminal Rossmann domain. NADP(+) contacts are provided by residues 26 to 29 (YGSQ), Lys-49, Ser-52, Ser-54, and 84 to 87 (DTAQ). His-109 is a catalytic residue. Residue Gly-135 participates in NADP(+) binding. Residues 184-329 (TFKEETETDL…KKLRDLMSWV (146 aa)) form the KARI C-terminal knotted domain. Positions 192, 196, 228, and 232 each coordinate Mg(2+). A substrate-binding site is contributed by Ser-253.

It belongs to the ketol-acid reductoisomerase family. Mg(2+) is required as a cofactor.

The enzyme catalyses (2R)-2,3-dihydroxy-3-methylbutanoate + NADP(+) = (2S)-2-acetolactate + NADPH + H(+). It carries out the reaction (2R,3R)-2,3-dihydroxy-3-methylpentanoate + NADP(+) = (S)-2-ethyl-2-hydroxy-3-oxobutanoate + NADPH + H(+). It functions in the pathway amino-acid biosynthesis; L-isoleucine biosynthesis; L-isoleucine from 2-oxobutanoate: step 2/4. The protein operates within amino-acid biosynthesis; L-valine biosynthesis; L-valine from pyruvate: step 2/4. In terms of biological role, involved in the biosynthesis of branched-chain amino acids (BCAA). Catalyzes an alkyl-migration followed by a ketol-acid reduction of (S)-2-acetolactate (S2AL) to yield (R)-2,3-dihydroxy-isovalerate. In the isomerase reaction, S2AL is rearranged via a Mg-dependent methyl migration to produce 3-hydroxy-3-methyl-2-ketobutyrate (HMKB). In the reductase reaction, this 2-ketoacid undergoes a metal-dependent reduction by NADPH to yield (R)-2,3-dihydroxy-isovalerate. The polypeptide is Ketol-acid reductoisomerase (NADP(+)) (Mycolicibacterium smegmatis (strain ATCC 700084 / mc(2)155) (Mycobacterium smegmatis)).